A 153-amino-acid chain; its full sequence is Endoribonuclease YbeY (153 aa).

3 residues coordinate Zn(2+): H116, H120, and H126.

Belongs to the endoribonuclease YbeY family. Requires Zn(2+) as cofactor.

Its subcellular location is the cytoplasm. Its function is as follows. Single strand-specific metallo-endoribonuclease involved in late-stage 70S ribosome quality control and in maturation of the 3' terminus of the 16S rRNA. The sequence is that of Endoribonuclease YbeY from Clavibacter michiganensis subsp. michiganensis (strain NCPPB 382).